The chain runs to 68 residues: ATP synthase F(0) complex subunit 8 (68 aa).

Residues Thr8–Phe24 form a helical membrane-spanning segment. Lys54 carries the post-translational modification N6-acetyllysine; alternate. The residue at position 54 (Lys54) is an N6-succinyllysine; alternate. The residue at position 57 (Lys57) is an N6-acetyllysine.

This sequence belongs to the ATPase protein 8 family. In terms of assembly, component of the ATP synthase complex composed at least of ATP5F1A/subunit alpha, ATP5F1B/subunit beta, ATP5MC1/subunit c (homooctomer), MT-ATP6/subunit a, MT-ATP8/subunit 8, ATP5ME/subunit e, ATP5MF/subunit f, ATP5MG/subunit g, ATP5MK/subunit k, ATP5MJ/subunit j, ATP5F1C/subunit gamma, ATP5F1D/subunit delta, ATP5F1E/subunit epsilon, ATP5PF/subunit F6, ATP5PB/subunit b, ATP5PD/subunit d, ATP5PO/subunit OSCP. ATP synthase complex consists of a soluble F(1) head domain (subunits alpha(3) and beta(3)) - the catalytic core - and a membrane F(0) domain - the membrane proton channel (subunits c, a, 8, e, f, g, k and j). These two domains are linked by a central stalk (subunits gamma, delta, and epsilon) rotating inside the F1 region and a stationary peripheral stalk (subunits F6, b, d, and OSCP). Interacts with PRICKLE3.

It is found in the mitochondrion membrane. Functionally, subunit 8, of the mitochondrial membrane ATP synthase complex (F(1)F(0) ATP synthase or Complex V) that produces ATP from ADP in the presence of a proton gradient across the membrane which is generated by electron transport complexes of the respiratory chain. ATP synthase complex consist of a soluble F(1) head domain - the catalytic core - and a membrane F(1) domain - the membrane proton channel. These two domains are linked by a central stalk rotating inside the F(1) region and a stationary peripheral stalk. During catalysis, ATP synthesis in the catalytic domain of F(1) is coupled via a rotary mechanism of the central stalk subunits to proton translocation. In vivo, can only synthesize ATP although its ATP hydrolase activity can be activated artificially in vitro. Part of the complex F(0) domain. This is ATP synthase F(0) complex subunit 8 from Ceratotherium simum (White rhinoceros).